Reading from the N-terminus, the 272-residue chain is L-aspartate dehydrogenase (272 aa).

Ala125 and Asn192 together coordinate NAD(+). His222 is a catalytic residue.

The protein belongs to the L-aspartate dehydrogenase family.

It carries out the reaction L-aspartate + NADP(+) + H2O = oxaloacetate + NH4(+) + NADPH + H(+). The catalysed reaction is L-aspartate + NAD(+) + H2O = oxaloacetate + NH4(+) + NADH + H(+). It participates in cofactor biosynthesis; NAD(+) biosynthesis; iminoaspartate from L-aspartate (dehydrogenase route): step 1/1. In terms of biological role, specifically catalyzes the NAD or NADP-dependent dehydrogenation of L-aspartate to iminoaspartate. The chain is L-aspartate dehydrogenase from Nitrosopumilus maritimus (strain SCM1).